Here is a 798-residue protein sequence, read N- to C-terminus: Transferrin receptor protein 2 (798 aa).

The Cytoplasmic portion of the chain corresponds to 1-81; the sequence is MEQRWGLLRR…WAAAGRKAAP (81 aa). Residues 23 to 26 carry the Endocytosis signal motif; it reads YRRV. Residues 82-102 traverse the membrane as a helical; Signal-anchor for type II membrane protein segment; it reads YLVLITLLIFTGAFLLGYVAF. Topologically, residues 103-798 are extracellular; that stretch reads RGSCQACGDS…GDVWNIDNNF (696 aa). N-linked (GlcNAc...) asparagine glycosylation is found at N235, N334, and N535.

This sequence belongs to the peptidase M28 family. M28B subfamily. In terms of tissue distribution, predominantly expressed in liver. Also expressed in kidney, spleen, brain, lung, heart and muscle with very low expression in kidney, muscle and heart.

The protein localises to the cell membrane. The protein resides in the cytoplasm. Its function is as follows. Mediates cellular uptake of transferrin-bound iron in a non-iron dependent manner. May be involved in iron metabolism, hepatocyte function and erythrocyte differentiation. This is Transferrin receptor protein 2 (Tfr2) from Mus musculus (Mouse).